A 342-amino-acid chain; its full sequence is Manganese-dependent ADP-ribose/CDP-alcohol diphosphatase (342 aa).

Zn(2+) contacts are provided by Asp-18, Gln-20, Asp-67, Asn-103, His-239, His-276, and His-278.

Belongs to the ADPRibase-Mn family. Monomer. Requires Mg(2+) as cofactor.

It carries out the reaction CDP-choline + H2O = phosphocholine + CMP + 2 H(+). The enzyme catalyses ADP-D-ribose + H2O = D-ribose 5-phosphate + AMP + 2 H(+). It catalyses the reaction CDP-glycerol + H2O = sn-glycerol 3-phosphate + CMP + 2 H(+). Hydrolyzes ADP-ribose, IDP-ribose, CDP-glycerol, CDP-choline and CDP-ethanolamine, but not other non-reducing ADP-sugars or CDP-glucose. The polypeptide is Manganese-dependent ADP-ribose/CDP-alcohol diphosphatase (adprm) (Xenopus tropicalis (Western clawed frog)).